The following is a 397-amino-acid chain: Ubiquitin-like modifier-activating enzyme 5 (397 aa).

ATP-binding residues include Gly-76, Asp-97, Lys-120, Asn-143, and Asn-177. 2 residues coordinate Zn(2+): Cys-219 and Cys-222. Residue Cys-243 is the Glycyl thioester intermediate of the active site. Residues Cys-296 and Cys-301 each contribute to the Zn(2+) site. A disordered region spans residues 362-384 (LAYEPPASTKHSETTSTTAVSDD). The segment covering 375-384 (TTSTTAVSDD) has biased composition (low complexity).

This sequence belongs to the ubiquitin-activating E1 family. UBA5 subfamily.

Functionally, E1-like enzyme which activates UFM1. In Aedes aegypti (Yellowfever mosquito), this protein is Ubiquitin-like modifier-activating enzyme 5.